The primary structure comprises 58 residues: Bowman-Birk type wound-induced trypsin inhibitor (58 aa).

Cystine bridges form between Cys-4–Cys-57, Cys-5–Cys-20, Cys-8–Cys-53, Cys-10–Cys-18, Cys-27–Cys-34, Cys-31–Cys-46, and Cys-36–Cys-44.

It belongs to the Bowman-Birk serine protease inhibitor family.

This Medicago sativa (Alfalfa) protein is Bowman-Birk type wound-induced trypsin inhibitor.